Reading from the N-terminus, the 331-residue chain is Phosphate acyltransferase (331 aa).

Belongs to the PlsX family. Homodimer. Probably interacts with PlsY.

The protein localises to the cytoplasm. It carries out the reaction a fatty acyl-[ACP] + phosphate = an acyl phosphate + holo-[ACP]. It participates in lipid metabolism; phospholipid metabolism. Catalyzes the reversible formation of acyl-phosphate (acyl-PO(4)) from acyl-[acyl-carrier-protein] (acyl-ACP). This enzyme utilizes acyl-ACP as fatty acyl donor, but not acyl-CoA. The polypeptide is Phosphate acyltransferase (Exiguobacterium sibiricum (strain DSM 17290 / CCUG 55495 / CIP 109462 / JCM 13490 / 255-15)).